A 329-amino-acid chain; its full sequence is POU domain, class 5, transcription factor 2 (329 aa).

Polar residues predominate over residues 1–14; it reads MAGRRSSNVFPLSG. A disordered region spans residues 1-24; sequence MAGRRSSNVFPLSGNSGGGLEVDT. The 75-residue stretch at 107 to 181 folds into the POU-specific domain; sequence DVSAIQKEME…LLKMWLEEVD (75 aa). The segment at residues 199-258 is a DNA-binding region (homeobox); it reads RKRRRASRERRIGSNLEKLFLQCPEPTPQQISYIAGRLRLQKDLVQVWFSNRSQMGSWPT.

Belongs to the POU transcription factor family. Class-5 subfamily. In adult brain, expressed in the olfactory bulb, becoming specifically concentrated in the mitral cell layer. Also found in the pyramidal cell layer of the hippocampus, in the granule cell layer of the cerebellum and in the cortex.

It localises to the nucleus. Functionally, transcription factor that binds preferentially to the octamer motif (5'-ATGTTAAT-3'). May exert a regulatory function in meiotic events that are required for terminal differentiation of male germ cell. This is POU domain, class 5, transcription factor 2 (Pou5f2) from Mus musculus (Mouse).